A 239-amino-acid chain; its full sequence is Protein UL20 homolog (239 aa).

3 consecutive transmembrane segments (helical) span residues 65–81 (PSFS…ALVI), 140–156 (FVIG…FMVV), and 189–208 (LMPL…STAV).

The protein belongs to the alphaherpesvirinae UL20 family. As to quaternary structure, interacts with gK (via N-terminus); this interaction plays a role in the coordinate transport of UL20 and gK to the trans-Golgi network (TGN), and is required for their cell surface expression. Interacts with gB.

It localises to the virion. Its subcellular location is the host cell membrane. It is found in the host endosome membrane. The protein localises to the host Golgi apparatus membrane. The protein resides in the host nucleus membrane. In terms of biological role, plays an essential role in egress of virus particles from the nucleus, cytoplasmic envelopment and virus-induced cell fusion. Forms a functional protein complex with gK and this interaction is absolutely essential for their coordinate intracellular transport, gK glycosylation, expression on host cell surface, and function. Together, they modulate gB-mediated virus-induced cell fusion and virion egress and therefore actively participate in these processes. The polypeptide is Protein UL20 homolog (Equus caballus (Horse)).